The primary structure comprises 169 residues: Ribosome maturation factor RimM (169 aa).

The 77-residue stretch at 91–167 (EGEYYFADLI…RIVIATDFAH (77 aa)) folds into the PRC barrel domain.

It belongs to the RimM family. Binds ribosomal protein uS19.

The protein resides in the cytoplasm. An accessory protein needed during the final step in the assembly of 30S ribosomal subunit, possibly for assembly of the head region. Essential for efficient processing of 16S rRNA. May be needed both before and after RbfA during the maturation of 16S rRNA. It has affinity for free ribosomal 30S subunits but not for 70S ribosomes. The chain is Ribosome maturation factor RimM from Erythrobacter litoralis (strain HTCC2594).